We begin with the raw amino-acid sequence, 561 residues long: Arginine--tRNA ligase (561 aa).

A 'HIGH' region motif is present at residues 129–139 (ANPTGPLHVGH).

This sequence belongs to the class-I aminoacyl-tRNA synthetase family. In terms of assembly, monomer.

Its subcellular location is the cytoplasm. The catalysed reaction is tRNA(Arg) + L-arginine + ATP = L-arginyl-tRNA(Arg) + AMP + diphosphate. The chain is Arginine--tRNA ligase from Bordetella petrii (strain ATCC BAA-461 / DSM 12804 / CCUG 43448).